The following is a 249-amino-acid chain: Putative S-adenosyl-L-methionine-dependent methyltransferase Mkms_0592 (249 aa).

S-adenosyl-L-methionine-binding positions include Asp111 and 141–142; that span reads DL.

The protein belongs to the UPF0677 family.

Exhibits S-adenosyl-L-methionine-dependent methyltransferase activity. This is Putative S-adenosyl-L-methionine-dependent methyltransferase Mkms_0592 from Mycobacterium sp. (strain KMS).